Reading from the N-terminus, the 209-residue chain is D-aminoacyl-tRNA deacylase 1 (209 aa).

Mg(2+) contacts are provided by Val4, Gln6, and Cys28. The Gly-cisPro motif, important for rejection of L-amino acids motif lies at 139–140 (GP). The disordered stretch occupies residues 142–209 (TIELESPAPG…EGDVSSEREP (68 aa)). Composition is skewed to basic and acidic residues over residues 159–170 (QLSKLEKQQQRK) and 181–194 (SSKE…EDRS). A phosphoserine mark is found at Ser197, Ser204, and Ser205.

This sequence belongs to the DTD family. In terms of assembly, homodimer. Interacts with CDC45 and TOPBP1. Preferentially phosphorylated in cells arrested early in S phase. Phosphorylation in the C-terminus weakens the interaction with CDC45.

The protein localises to the nucleus. It localises to the cytoplasm. It catalyses the reaction glycyl-tRNA(Ala) + H2O = tRNA(Ala) + glycine + H(+). The catalysed reaction is a D-aminoacyl-tRNA + H2O = a tRNA + a D-alpha-amino acid + H(+). An aminoacyl-tRNA editing enzyme that deacylates mischarged D-aminoacyl-tRNAs. Also deacylates mischarged glycyl-tRNA(Ala), protecting cells against glycine mischarging by AlaRS. Acts via tRNA-based rather than protein-based catalysis; rejects L-amino acids rather than detecting D-amino acids in the active site. By recycling D-aminoacyl-tRNA to D-amino acids and free tRNA molecules, this enzyme counteracts the toxicity associated with the formation of D-aminoacyl-tRNA entities in vivo and helps enforce protein L-homochirality. In terms of biological role, ATPase involved in DNA replication, may facilitate loading of CDC45 onto pre-replication complexes. The protein is D-aminoacyl-tRNA deacylase 1 (DTD1) of Bos taurus (Bovine).